The sequence spans 123 residues: MGFVLICTCPPSSGVVVSQLHHHQFSAGVKSNELWFRPTRRTLISKSSCFNLPQEPILSEALKEPIAFLGGMFAGLLRLDLNEEPLKDWVTRTVEASGITEEEVDADGVVSNDEDSPQQIEIE.

The N-terminal 26 residues, 1–26 (MGFVLICTCPPSSGVVVSQLHHHQFS), are a transit peptide targeting the chloroplast. The tract at residues 97–123 (SGITEEEVDADGVVSNDEDSPQQIEIE) is disordered. Acidic residues predominate over residues 100 to 123 (TEEEVDADGVVSNDEDSPQQIEIE).

It belongs to the UPF0426 family.

Its subcellular location is the plastid. The protein resides in the chloroplast. It localises to the plastoglobule. This Arabidopsis thaliana (Mouse-ear cress) protein is UPF0426 protein At1g28150, chloroplastic.